Reading from the N-terminus, the 319-residue chain is Ribonuclease Z (319 aa).

His-62, His-64, Asp-66, His-67, His-139, Asp-210, and His-268 together coordinate Zn(2+). Asp-66 acts as the Proton acceptor in catalysis.

This sequence belongs to the RNase Z family. As to quaternary structure, homodimer. Requires Zn(2+) as cofactor.

It catalyses the reaction Endonucleolytic cleavage of RNA, removing extra 3' nucleotides from tRNA precursor, generating 3' termini of tRNAs. A 3'-hydroxy group is left at the tRNA terminus and a 5'-phosphoryl group is left at the trailer molecule.. In terms of biological role, zinc phosphodiesterase, which displays some tRNA 3'-processing endonuclease activity. Probably involved in tRNA maturation, by removing a 3'-trailer from precursor tRNA. The sequence is that of Ribonuclease Z from Nostoc punctiforme (strain ATCC 29133 / PCC 73102).